Reading from the N-terminus, the 258-residue chain is Large ribosomal subunit protein uL2x (258 aa).

Positions 211-231 (HGGGNHQHIGHASTVRRDAPP) are disordered.

It belongs to the universal ribosomal protein uL2 family.

The sequence is that of Large ribosomal subunit protein uL2x (RPL8C) from Arabidopsis thaliana (Mouse-ear cress).